The following is a 421-amino-acid chain: Gamma-glutamyl phosphate reductase (421 aa).

Belongs to the gamma-glutamyl phosphate reductase family.

The protein localises to the cytoplasm. It carries out the reaction L-glutamate 5-semialdehyde + phosphate + NADP(+) = L-glutamyl 5-phosphate + NADPH + H(+). Its pathway is amino-acid biosynthesis; L-proline biosynthesis; L-glutamate 5-semialdehyde from L-glutamate: step 2/2. Catalyzes the NADPH-dependent reduction of L-glutamate 5-phosphate into L-glutamate 5-semialdehyde and phosphate. The product spontaneously undergoes cyclization to form 1-pyrroline-5-carboxylate. The chain is Gamma-glutamyl phosphate reductase from Brucella melitensis biotype 1 (strain ATCC 23456 / CCUG 17765 / NCTC 10094 / 16M).